Here is a 406-residue protein sequence, read N- to C-terminus: Glutamyl-tRNA reductase (406 aa).

Residues 50 to 53 (TCNR), S107, 112 to 114 (EPQ), and Q118 contribute to the substrate site. Catalysis depends on C51, which acts as the Nucleophile. Position 187–192 (187–192 (GAGEMG)) interacts with NADP(+).

The protein belongs to the glutamyl-tRNA reductase family. In terms of assembly, homodimer.

The catalysed reaction is (S)-4-amino-5-oxopentanoate + tRNA(Glu) + NADP(+) = L-glutamyl-tRNA(Glu) + NADPH + H(+). Its pathway is porphyrin-containing compound metabolism; protoporphyrin-IX biosynthesis; 5-aminolevulinate from L-glutamyl-tRNA(Glu): step 1/2. In terms of biological role, catalyzes the NADPH-dependent reduction of glutamyl-tRNA(Glu) to glutamate 1-semialdehyde (GSA). The sequence is that of Glutamyl-tRNA reductase from Aquifex aeolicus (strain VF5).